The following is a 273-amino-acid chain: Protein FAM210A (273 aa).

The tract at residues 94-116 is disordered; the sequence is RVLSSSSTSQETPSEKKEETDPL. The segment covering 106–116 has biased composition (basic and acidic residues); the sequence is PSEKKEETDPL. A DUF1279 domain is found at 118–230; the sequence is DKSISLYQRF…GYMSTPPPVK (113 aa). Residues 138–158 form a helical membrane-spanning segment; the sequence is LIPVHLITSGIWFGTFYYATI. Residues 233–269 adopt a coiled-coil conformation; the sequence is LQGRMEETKELITEKMEETKDRLTEKLQETKGKVSFK.

This sequence belongs to the FAM210 family. In terms of assembly, interacts with ATAD3A. Expressed in skeletal muscle, heart, brain but not in bone.

Its subcellular location is the membrane. It is found in the mitochondrion. The protein resides in the cytoplasm. Its function is as follows. May play a role in the structure and strength of both muscle and bone. This chain is Protein FAM210A (Fam210a), found in Mus musculus (Mouse).